Consider the following 168-residue polypeptide: Plastocyanin, chloroplastic (168 aa).

The region spanning 70-168 is the Plastocyanin-like domain; the sequence is VEVLLGGGDG…AGMVGKVTVN (99 aa). Residues histidine 106, cysteine 153, histidine 156, and methionine 161 each contribute to the Cu cation site.

It belongs to the plastocyanin family. Requires Cu(2+) as cofactor.

The protein localises to the plastid. Its subcellular location is the chloroplast thylakoid membrane. Participates in electron transfer between P700 and the cytochrome b6-f complex in photosystem I. The chain is Plastocyanin, chloroplastic (PETE) from Spinacia oleracea (Spinach).